Reading from the N-terminus, the 153-residue chain is Endoribonuclease YbeY (153 aa).

Zn(2+) is bound by residues His-114, His-118, and His-124.

The protein belongs to the endoribonuclease YbeY family. The cofactor is Zn(2+).

It localises to the cytoplasm. Its function is as follows. Single strand-specific metallo-endoribonuclease involved in late-stage 70S ribosome quality control and in maturation of the 3' terminus of the 16S rRNA. The chain is Endoribonuclease YbeY from Shewanella putrefaciens (strain CN-32 / ATCC BAA-453).